Reading from the N-terminus, the 93-residue chain is Stromal cell-derived factor 1 (93 aa).

The signal sequence occupies residues 1-21 (MDIRTLALFSILLGSLCLSEG). The Receptor activation motif motif lies at 22 to 23 (KP). The receptor and heparin binding stretch occupies residues 29-33 (RCPCR). 2 disulfide bridges follow: C30–C55 and C32–C71. Residues 41-51 (KSNIKHLKILS), R62, Q69, and K85 each bind heparin. Receptor binding stretches follow at residues 48–50 (KIL) and 60–64 (VARLK).

It belongs to the intercrine alpha (chemokine CxC) family. As to quaternary structure, monomer or homodimer; in equilibrium. Dimer formation is induced by non acidic pH and the presence of multivalent anions, and by binding to cxcr4 or heparin.

It is found in the secreted. Chemoattractant. Activates the C-X-C chemokine receptor cxcr4 to induce a rapid and transient rise in the level of intracellular calcium ions, and chemotaxis. Signaling with cxcr4 mediates the directional movement of mesodermal cells during gastrulation. Binds to the allosteric site (site 2) of integrins and activates them in a cxcr4-independent manner. The polypeptide is Stromal cell-derived factor 1 (Xenopus tropicalis (Western clawed frog)).